The primary structure comprises 274 residues: Nitrogenase iron protein (274 aa).

Position 8 to 15 (8 to 15 (GKGGIGKS)) interacts with ATP. Residue C94 participates in [4Fe-4S] cluster binding. R97 bears the ADP-ribosylarginine; by dinitrogenase reductase ADP-ribosyltransferase mark. C129 is a binding site for [4Fe-4S] cluster.

This sequence belongs to the NifH/BchL/ChlL family. As to quaternary structure, homodimer. The cofactor is [4Fe-4S] cluster. The reversible ADP-ribosylation of Arg-97 inactivates the nitrogenase reductase and regulates nitrogenase activity.

It carries out the reaction N2 + 8 reduced [2Fe-2S]-[ferredoxin] + 16 ATP + 16 H2O = H2 + 8 oxidized [2Fe-2S]-[ferredoxin] + 2 NH4(+) + 16 ADP + 16 phosphate + 6 H(+). Functionally, the key enzymatic reactions in nitrogen fixation are catalyzed by the nitrogenase complex, which has 2 components: the iron protein and the molybdenum-iron protein. The polypeptide is Nitrogenase iron protein (Methanocella arvoryzae (strain DSM 22066 / NBRC 105507 / MRE50)).